Reading from the N-terminus, the 433-residue chain is Cell adhesion molecule 2 (433 aa).

An N-terminal signal peptide occupies residues 1–24; it reads MILQPSALLCLSSLWGVIVQASQG. Topologically, residues 25 to 365 are extracellular; the sequence is QFPVTQNVTV…ALPGPVATDH (341 aa). The region spanning 27–114 is the Ig-like V-type domain; it reads PVTQNVTVVE…SLFTMPVKTS (88 aa). N-linked (GlcNAc...) asparagine glycans are attached at residues N31, N41, and N51. 3 disulfide bridges follow: C44/C104, C146/C203, and C248/C296. 2 Ig-like C2-type domains span residues 127–217 and 227–312; these read PHIS…PQIA and PTVR…YVLI. 2 N-linked (GlcNAc...) asparagine glycosylation sites follow: N287 and N291. Residues 366 to 386 traverse the membrane as a helical segment; the sequence is ALIGGVVAVVVFVTLCSIILI. Over 387 to 433 the chain is Cytoplasmic; the sequence is GRYLARHKGTYLTNEAKGAEDAPDADTAIINAEGSQVNAEEKKEYFI.

It belongs to the nectin family.

It localises to the membrane. The sequence is that of Cell adhesion molecule 2 (cadm2) from Xenopus tropicalis (Western clawed frog).